Consider the following 130-residue polypeptide: Small ribosomal subunit protein uS8 (130 aa).

This sequence belongs to the universal ribosomal protein uS8 family. In terms of assembly, part of the 30S ribosomal subunit.

In terms of biological role, one of the primary rRNA binding proteins, it binds directly to 16S rRNA central domain where it helps coordinate assembly of the platform of the 30S subunit. This is Small ribosomal subunit protein uS8 from Haloquadratum walsbyi (strain DSM 16790 / HBSQ001).